Here is a 258-residue protein sequence, read N- to C-terminus: 3-deoxy-manno-octulosonate cytidylyltransferase (258 aa).

This sequence belongs to the KdsB family.

It localises to the cytoplasm. It carries out the reaction 3-deoxy-alpha-D-manno-oct-2-ulosonate + CTP = CMP-3-deoxy-beta-D-manno-octulosonate + diphosphate. It participates in nucleotide-sugar biosynthesis; CMP-3-deoxy-D-manno-octulosonate biosynthesis; CMP-3-deoxy-D-manno-octulosonate from 3-deoxy-D-manno-octulosonate and CTP: step 1/1. Its pathway is bacterial outer membrane biogenesis; lipopolysaccharide biosynthesis. Its function is as follows. Activates KDO (a required 8-carbon sugar) for incorporation into bacterial lipopolysaccharide in Gram-negative bacteria. The protein is 3-deoxy-manno-octulosonate cytidylyltransferase of Pasteurella multocida (strain Pm70).